Consider the following 186-residue polypeptide: NADH-quinone oxidoreductase subunit I (186 aa).

2 consecutive 4Fe-4S ferredoxin-type domains span residues 70 to 100 (LTTR…IQSA) and 113 to 142 (DRFE…MSKD). Positions 80, 83, 86, 90, 122, 125, 128, and 132 each coordinate [4Fe-4S] cluster.

Belongs to the complex I 23 kDa subunit family. In terms of assembly, NDH-1 is composed of 14 different subunits. Subunits NuoA, H, J, K, L, M, N constitute the membrane sector of the complex. Requires [4Fe-4S] cluster as cofactor.

Its subcellular location is the cell inner membrane. The catalysed reaction is a quinone + NADH + 5 H(+)(in) = a quinol + NAD(+) + 4 H(+)(out). Its function is as follows. NDH-1 shuttles electrons from NADH, via FMN and iron-sulfur (Fe-S) centers, to quinones in the respiratory chain. The immediate electron acceptor for the enzyme in this species is believed to be ubiquinone. Couples the redox reaction to proton translocation (for every two electrons transferred, four hydrogen ions are translocated across the cytoplasmic membrane), and thus conserves the redox energy in a proton gradient. The protein is NADH-quinone oxidoreductase subunit I of Pelobacter propionicus (strain DSM 2379 / NBRC 103807 / OttBd1).